The following is a 284-amino-acid chain: Short chain dehydrogenase/reductase AacuD (284 aa).

Residue Val-37 participates in NADP(+) binding. Residues Ser-166 and Tyr-180 each act as proton donor in the active site. NADP(+)-binding residues include Tyr-180, Lys-184, and Thr-215. Lys-184 acts as the Lowers pKa of active site Tyr in catalysis.

The protein belongs to the short-chain dehydrogenases/reductases (SDR) family.

The protein operates within secondary metabolite biosynthesis. Functionally, short chain dehydrogenase/reductase; part of the gene cluster that mediates the biosynthesis of the tetrahydroxanthone dimer secalonic acid D. The pathway begins with the synthesis of atrochrysone thioester by the polyketide synthase AacuL. The atrochrysone carboxyl ACP thioesterase AacuM then breaks the thioester bond and releases the atrochrysone carboxylic acid from AacuL. Atrochrysone carboxylic acid is decarboxylated by the decarboxylase AacuI, and oxidized by the anthrone oxygenase AacuG to yield emodin. Emodin is then reduced to emodin hydroquinone by a yet unidentified oxidoreductase. A-ring reduction by the short chain dehydrogenase AacuN, dehydration by the scytalone dehydratase-like protein AacuK and probable spontaneous re-oxidation, results in overall deoxygenation to chrysophanol. Baeyer-Villiger oxidation by the Baeyer-Villiger monooxygenase (BVMO) AacuH then yields monodictyphenone. Monodictyphenone is transformed into compounds with the tetrahydroxanthone skeleton via methylesterification by the methyltransferase AacuQ, followed by the action of the flavin-dependent monooxygenase AacuC, the isomerase AacuP, and the short chain dehydrogenase/reductase AacuF or AacuD. AacuF and AacuD should accept the same compound as a substrate but perform the ketoreduction with a different stereoselectivity, thus yielding blennolides B and A, respectively. In the final step of the biosynthesis, the cytochrome P450 monooxygenase AacuE accepts blennolide B and/or blennolide A to conduct the dimerization reaction to furnish the tetrahydroxanthone dimers, secalonic acids D, B, and F. The chain is Short chain dehydrogenase/reductase AacuD from Aspergillus aculeatus (strain ATCC 16872 / CBS 172.66 / WB 5094).